A 196-amino-acid chain; its full sequence is Imidazoleglycerol-phosphate dehydratase (196 aa).

The protein belongs to the imidazoleglycerol-phosphate dehydratase family.

It localises to the cytoplasm. The catalysed reaction is D-erythro-1-(imidazol-4-yl)glycerol 3-phosphate = 3-(imidazol-4-yl)-2-oxopropyl phosphate + H2O. Its pathway is amino-acid biosynthesis; L-histidine biosynthesis; L-histidine from 5-phospho-alpha-D-ribose 1-diphosphate: step 6/9. The sequence is that of Imidazoleglycerol-phosphate dehydratase from Clostridium botulinum (strain Okra / Type B1).